Consider the following 105-residue polypeptide: Small ribosomal subunit protein uS10 (105 aa).

The protein belongs to the universal ribosomal protein uS10 family. As to quaternary structure, part of the 30S ribosomal subunit.

Functionally, involved in the binding of tRNA to the ribosomes. The sequence is that of Small ribosomal subunit protein uS10 from Rickettsia rickettsii (strain Iowa).